A 137-amino-acid chain; its full sequence is Large ribosomal subunit protein uL16 (137 aa).

It belongs to the universal ribosomal protein uL16 family. Part of the 50S ribosomal subunit.

In terms of biological role, binds 23S rRNA and is also seen to make contacts with the A and possibly P site tRNAs. The chain is Large ribosomal subunit protein uL16 from Stenotrophomonas maltophilia (strain R551-3).